We begin with the raw amino-acid sequence, 321 residues long: Arabinan endo-1,5-alpha-L-arabinosidase A (321 aa).

A signal peptide spans 1–19 (MYQLLSVASVPLLASLVHG). The active-site Proton acceptor is Asp34. Catalysis depends on Glu200, which acts as the Proton donor. Asn295 is a glycosylation site (N-linked (GlcNAc...) asparagine).

Belongs to the glycosyl hydrolase 43 family.

The enzyme catalyses Endohydrolysis of (1-&gt;5)-alpha-arabinofuranosidic linkages in (1-&gt;5)-arabinans.. The protein operates within glycan metabolism; L-arabinan degradation. In terms of biological role, its preferred substrate is linear 1,5-alpha-L-arabinan. The enzyme activity is progressively reduced as 1,5-alpha-chains become shorter or more highly substituted. This is Arabinan endo-1,5-alpha-L-arabinosidase A (abnA) from Aspergillus niger.